A 1482-amino-acid polypeptide reads, in one-letter code: Pregnancy zone protein (1482 aa).

The N-terminal stretch at 1-25 (MRKDRLLHLCLVLLLILLSASDSNS) is a signal peptide. 5 N-linked (GlcNAc...) asparagine glycosylation sites follow: N54, N69, N246, N392, and N406. The segment at 685–735 (CSVIPSVSAGAVGQGYYGAGLGVVERPYVPQLGTYNVIPLNNEQSSGPVPE) is bait region. N753, N875, and N932 each carry an N-linked (GlcNAc...) asparagine glycan. Residues 978-981 (CGEQ) constitute a cross-link (isoglutamyl cysteine thioester (Cys-Gln)). N-linked (GlcNAc...) asparagine glycosylation is found at N997 and N1430.

The protein belongs to the protease inhibitor I39 (alpha-2-macroglobulin) family. As to quaternary structure, homotetramer, which consists of two pairs of disulfide-linked chains. As to expression, plasma. Prominent constituent of late-pregnancy sera.

The protein localises to the secreted. Its function is as follows. Is able to inhibit all four classes of proteinases by a unique 'trapping' mechanism. This protein has a peptide stretch, called the 'bait region' which contains specific cleavage sites for different proteinases. When a proteinase cleaves the bait region, a conformational change is induced in the protein which traps the proteinase. The entrapped enzyme remains active against low molecular weight substrates (activity against high molecular weight substrates is greatly reduced). Following cleavage in the bait region a thioester bond is hydrolyzed and mediates the covalent binding of the protein to the proteinase. This Homo sapiens (Human) protein is Pregnancy zone protein (PZP).